The following is a 568-amino-acid chain: MPSTDLLKLKDFEPYLEILEAYSTKAKNYVNGYCTKYEPWQLIAGSVLCTLLVVWVYELIFQPESLWSRFKNKLFRLIRKMPFIGRKIQQQLTKAKKDLVKNMPFLKLDKDYVKTLPAQGLSTAEVLERLKEYSSMDVFWQEGKASGAVYSGEPKLTELLVQAYGEFTWSNPLHPDIFPGLRKLEAEIVRMTCSLFNGGPDSCGCVTSGGTESILMACKAYRDLALEKGIKTPEIVAPESAHAAFDKAAHYFGMKIVRVAQKKNMEVDVRAMKRAISRNTAMLVCSAPQFPHGVIDPIPEVAKLAVKYKIPFHVDACLGGFLIVFMEKAGYPLEKPFDFRVKGVTSISADTHKYGYAPKGSSVVMYSNEKYRKYQFFVDADWQGGIYASPSIAGSRPGGIIAACWAALMHFGENGYVEATKQIIKTARFLKSELENIKNIFILGDPQLSVIALGSNDFDIYRLSNMMSAKGWNFNYLQFPRSIHFCITLVHTRKRVAIQFLKDIRESVTQIMKNPKAKTTGMGAIYGMAQATIDRKMVAEISSVFLDSLYSTDPVTQGNQMNGSPKPR.

At 1 to 41 the chain is on the lumenal side; that stretch reads MPSTDLLKLKDFEPYLEILEAYSTKAKNYVNGYCTKYEPWQ. The chain crosses the membrane as a helical; Signal-anchor for type III membrane protein span at residues 42–62; the sequence is LIAGSVLCTLLVVWVYELIFQ. At 63–568 the chain is on the cytoplasmic side; the sequence is PESLWSRFKN…NQMNGSPKPR (506 aa). Residue Lys-353 is modified to N6-(pyridoxal phosphate)lysine; alternate. Lys-353 bears the N6-acetyllysine; alternate mark. 2 positions are modified to 3'-nitrotyrosine: Tyr-356 and Tyr-366. Phosphoserine is present on Ser-564.

It belongs to the group II decarboxylase family. Sphingosine-1-phosphate lyase subfamily. Homodimer. Pyridoxal 5'-phosphate is required as a cofactor.

The protein localises to the endoplasmic reticulum membrane. It carries out the reaction sphinganine 1-phosphate = hexadecanal + phosphoethanolamine. The catalysed reaction is sphing-4-enine 1-phosphate = (2E)-hexadecenal + phosphoethanolamine. It functions in the pathway lipid metabolism; sphingolipid metabolism. Its function is as follows. Cleaves phosphorylated sphingoid bases (PSBs), such as sphingosine-1-phosphate, into fatty aldehydes and phosphoethanolamine. Elevates stress-induced ceramide production and apoptosis. Required for global lipid homeostasis in liver and cholesterol homeostasis in fibroblasts. Involved in the regulation of pro-inflammatory response and neutrophil trafficking. Modulates neuronal autophagy via phosphoethanolamine production which regulates accumulation of aggregate-prone proteins such as APP. Seems to play a role in establishing neuronal contact sites and axonal maintenance. The chain is Sphingosine-1-phosphate lyase 1 from Rattus norvegicus (Rat).